Here is a 354-residue protein sequence, read N- to C-terminus: Methionine import ATP-binding protein MetN (354 aa).

The region spanning 8–250 is the ABC transporter domain; sequence LDHIDITFRQ…PKEALTQKFI (243 aa). Residue 42–49 coordinates ATP; it reads GYSGAGKS.

The protein belongs to the ABC transporter superfamily. Methionine importer (TC 3.A.1.24) family. In terms of assembly, the complex is composed of two ATP-binding proteins (MetN), two transmembrane proteins (MetI) and a solute-binding protein (MetQ).

The protein resides in the cell membrane. The enzyme catalyses L-methionine(out) + ATP + H2O = L-methionine(in) + ADP + phosphate + H(+). It catalyses the reaction D-methionine(out) + ATP + H2O = D-methionine(in) + ADP + phosphate + H(+). Functionally, part of the ABC transporter complex MetNIQ involved in methionine import. Responsible for energy coupling to the transport system. This chain is Methionine import ATP-binding protein MetN, found in Streptococcus pyogenes serotype M6 (strain ATCC BAA-946 / MGAS10394).